The sequence spans 441 residues: Arginine biosynthesis bifunctional protein ArgJ, mitochondrial (441 aa).

The N-terminal 8 residues, methionine 1–leucine 8, are a transit peptide targeting the mitochondrion. Substrate-binding residues include threonine 177, lysine 204, threonine 215, glutamate 301, asparagine 436, and serine 441. Threonine 215 serves as the catalytic Nucleophile.

Belongs to the ArgJ family. Heterodimer of an alpha and a beta chain. Post-translationally, the alpha and beta chains are autoproteolytically processed from a single precursor protein within the mitochondrion.

It is found in the mitochondrion matrix. The enzyme catalyses N(2)-acetyl-L-ornithine + L-glutamate = N-acetyl-L-glutamate + L-ornithine. The catalysed reaction is L-glutamate + acetyl-CoA = N-acetyl-L-glutamate + CoA + H(+). The protein operates within amino-acid biosynthesis; L-arginine biosynthesis; L-ornithine and N-acetyl-L-glutamate from L-glutamate and N(2)-acetyl-L-ornithine (cyclic): step 1/1. It participates in amino-acid biosynthesis; L-arginine biosynthesis; N(2)-acetyl-L-ornithine from L-glutamate: step 1/4. Functionally, catalyzes two activities which are involved in the cyclic version of arginine biosynthesis: the synthesis of acetylglutamate from glutamate and acetyl-CoA, and of ornithine by transacetylation between acetylornithine and glutamate. This is Arginine biosynthesis bifunctional protein ArgJ, mitochondrial from Saccharomyces cerevisiae (strain Lalvin EC1118 / Prise de mousse) (Baker's yeast).